Reading from the N-terminus, the 357-residue chain is Serine proteinase inhibitor 1 (357 aa).

The protein belongs to the serpin family. Poxviruses subfamily.

It is found in the host cytoplasm. Functionally, plays a role in mediating viral host range. May act to inhibit a caspase independent form of apoptosis to allow efficient virus replication in infected cells. In Monkeypox virus, this protein is Serine proteinase inhibitor 1 (OPG208).